The sequence spans 214 residues: Pyridoxine/pyridoxamine 5'-phosphate oxidase (214 aa).

Residues 9–12 (RKDY) and K67 contribute to the substrate site. Residues 62-67 (RMVLLK), 77-78 (FT), R83, K84, and Q106 each bind FMN. Residues Y124, R128, and S132 each coordinate substrate. Residues 141–142 (QS) and W186 each bind FMN. 192-194 (RLH) is a binding site for substrate. R196 contributes to the FMN binding site.

It belongs to the pyridoxamine 5'-phosphate oxidase family. In terms of assembly, homodimer. FMN serves as cofactor.

It catalyses the reaction pyridoxamine 5'-phosphate + O2 + H2O = pyridoxal 5'-phosphate + H2O2 + NH4(+). The enzyme catalyses pyridoxine 5'-phosphate + O2 = pyridoxal 5'-phosphate + H2O2. It functions in the pathway cofactor metabolism; pyridoxal 5'-phosphate salvage; pyridoxal 5'-phosphate from pyridoxamine 5'-phosphate: step 1/1. It participates in cofactor metabolism; pyridoxal 5'-phosphate salvage; pyridoxal 5'-phosphate from pyridoxine 5'-phosphate: step 1/1. In terms of biological role, catalyzes the oxidation of either pyridoxine 5'-phosphate (PNP) or pyridoxamine 5'-phosphate (PMP) into pyridoxal 5'-phosphate (PLP). The protein is Pyridoxine/pyridoxamine 5'-phosphate oxidase of Trichormus variabilis (strain ATCC 29413 / PCC 7937) (Anabaena variabilis).